The sequence spans 445 residues: Ubiquitin carboxyl-terminal hydrolase 11 (445 aa).

One can recognise a USP domain in the interval 1–412; that stretch reads NSARADLCVA…AAYVLFYQRQ (412 aa). The disordered stretch occupies residues 127–194; the sequence is RPSSDDEDDG…GPSHWPQRAR (68 aa). Ser-130 is modified (phosphoserine). Over residues 131–140 the composition is skewed to acidic residues; it reads DDEDDGDEKD. His-362 functions as the Nucleophile in the catalytic mechanism. The active-site Proton acceptor is His-370. The segment at 416–445 is disordered; the sequence is RRLQPQPSSSDPPASPACGSPPNSEFMDVN. Residues 420 to 439 show a composition bias toward low complexity; it reads PQPSSSDPPASPACGSPPNS. At Ser-430 the chain carries Phosphoserine.

The protein belongs to the peptidase C19 family. In terms of assembly, monomer. Interacts with RANBP9/RANBPM. Interacts with BRCA2. Interacts with CHUK/IKKA. Interacts with NFKBIA. Associated component of the Polycomb group (PcG) multiprotein PRC1-like complex.

The protein resides in the nucleus. It localises to the cytoplasm. Its subcellular location is the chromosome. It carries out the reaction Thiol-dependent hydrolysis of ester, thioester, amide, peptide and isopeptide bonds formed by the C-terminal Gly of ubiquitin (a 76-residue protein attached to proteins as an intracellular targeting signal).. Protease that can remove conjugated ubiquitin from target proteins and polyubiquitin chains. Inhibits the degradation of target proteins by the proteasome. Cleaves preferentially 'Lys-6' and 'Lys-63'-linked ubiquitin chains. Has lower activity with 'Lys-11' and 'Lys-33'-linked ubiquitin chains, and extremely low activity with 'Lys-27', 'Lys-29' and 'Lys-48'-linked ubiquitin chains (in vitro). Plays a role in the regulation of pathways leading to NF-kappa-B activation. Plays a role in the regulation of DNA repair after double-stranded DNA breaks. Acts as a chromatin regulator via its association with the Polycomb group (PcG) multiprotein PRC1-like complex; may act by deubiquitinating components of the PRC1-like complex. Promotes cell proliferation by deubiquitinating phosphorylated E2F1. The sequence is that of Ubiquitin carboxyl-terminal hydrolase 11 (USP11) from Canis lupus familiaris (Dog).